The chain runs to 145 residues: 3-dehydroquinate dehydratase (145 aa).

Catalysis depends on Tyr24, which acts as the Proton acceptor. Asn75, His81, and Asp88 together coordinate substrate. Residue His101 is the Proton donor of the active site. Substrate-binding positions include 102–103 (IS) and Arg112.

Belongs to the type-II 3-dehydroquinase family. As to quaternary structure, homododecamer.

The enzyme catalyses 3-dehydroquinate = 3-dehydroshikimate + H2O. It participates in metabolic intermediate biosynthesis; chorismate biosynthesis; chorismate from D-erythrose 4-phosphate and phosphoenolpyruvate: step 3/7. Functionally, catalyzes a trans-dehydration via an enolate intermediate. The sequence is that of 3-dehydroquinate dehydratase from Corynebacterium glutamicum (strain R).